A 350-amino-acid polypeptide reads, in one-letter code: Biotin synthase (350 aa).

The Radical SAM core domain maps to 63 to 281; the sequence is GDIELATLLS…IAVARITMPK (219 aa). 3 residues coordinate [4Fe-4S] cluster: Cys78, Cys82, and Cys85. Positions 122, 153, 213, and 285 each coordinate [2Fe-2S] cluster.

It belongs to the radical SAM superfamily. Biotin synthase family. As to quaternary structure, homodimer. [4Fe-4S] cluster is required as a cofactor. It depends on [2Fe-2S] cluster as a cofactor.

The catalysed reaction is (4R,5S)-dethiobiotin + (sulfur carrier)-SH + 2 reduced [2Fe-2S]-[ferredoxin] + 2 S-adenosyl-L-methionine = (sulfur carrier)-H + biotin + 2 5'-deoxyadenosine + 2 L-methionine + 2 oxidized [2Fe-2S]-[ferredoxin]. Its pathway is cofactor biosynthesis; biotin biosynthesis; biotin from 7,8-diaminononanoate: step 2/2. Functionally, catalyzes the conversion of dethiobiotin (DTB) to biotin by the insertion of a sulfur atom into dethiobiotin via a radical-based mechanism. This chain is Biotin synthase, found in Acidovorax sp. (strain JS42).